Reading from the N-terminus, the 1014-residue chain is Chondroitin sulfate ABC exolyase (1014 aa).

An N-terminal signal peptide occupies residues 1–14; sequence MLILSFLCPAFLNA. Ca(2+) contacts are provided by serine 24, glutamate 26, aspartate 50, histidine 53, and aspartate 161. Residues histidine 345 and histidine 454 each act as proton acceptor in the active site. Residue tyrosine 461 is the Proton donor of the active site.

Belongs to the polysaccharide lyase 8 family. Monomer. Ca(2+) serves as cofactor. It depends on Mg(2+) as a cofactor.

It is found in the periplasm. The enzyme catalyses Exolytic removal of Delta(4)-unsaturated disaccharide residues from the non-reducing ends of both polymeric chondroitin/dermatan sulfates and their oligosaccharide fragments.. With respect to regulation, specific activity for chondroitin sulfate substrates increases moderately (2-fold) while an increase of 25-fold is observed for dermatan sulfate as substrate upon addition of Ca(2+) or Mg(2+) ions. Increasing the concentration of Na(+), K(+) or Cs(+) chloride from 0 to 0.1 M, increases the activity against all substrates. Further increases in salt concentration reduces the activity dramatically, with 50% inhibition occurring at 0.15 M and nearly complete inhibition at 0.4 M salt. The addition of 10 mM Ca(2+) or Mg(2+) ions increases the activity against chondroitin 4- and 6-sulfates by 2-3-fold, while the activity against dermatan sulfate increases much more significantly by 50-fold. Addition of Mn(2+) and Zn(2+) reduces activity against chondroitin sulfate substrates, but increases the activity against dermatan sulfate. Increasing the concentration of CaCl(2) with both chondroitin 4- and 6-sulfates from 0 to 0.04 M increases the activity. A further increase reduces activity, with 50% inhibition at 0.065-0.085 M and a complete inhibition of the reaction at 0.2 M. In case of dermatan sulfate, the addition of low concentration of CaCl(2) dramatically increases the activity from the basal level. The maximal activity is reached at 0.01 M CaCl(2). Broad-specificity glycosaminoglycan lyase, which acts in an exolytic fashion degrading chondroitin sulfates and dermatan sulfate to yield only disaccharide products. Has a preference for chondroitin 4-sulfate over chondroitin 6-sulfate. Has extremely low activity against hyaluronic acid. Is not active against acharan sulfate, heparin or heparan sulfate. This Bacteroides thetaiotaomicron protein is Chondroitin sulfate ABC exolyase (chonabc).